Consider the following 129-residue polypeptide: Glycine cleavage system H protein (129 aa).

The 83-residue stretch at 23-105 (SAVVGITEHA…YGEGWLAKFS (83 aa)) folds into the Lipoyl-binding domain. At Lys64 the chain carries N6-lipoyllysine.

Belongs to the GcvH family. The glycine cleavage system is composed of four proteins: P, T, L and H. The cofactor is (R)-lipoate.

In terms of biological role, the glycine cleavage system catalyzes the degradation of glycine. The H protein shuttles the methylamine group of glycine from the P protein to the T protein. This chain is Glycine cleavage system H protein, found in Herpetosiphon aurantiacus (strain ATCC 23779 / DSM 785 / 114-95).